The sequence spans 1070 residues: DNA-directed RNA polymerase subunit beta (1070 aa).

Belongs to the RNA polymerase beta chain family. As to quaternary structure, in plastids the minimal PEP RNA polymerase catalytic core is composed of four subunits: alpha, beta, beta', and beta''. When a (nuclear-encoded) sigma factor is associated with the core the holoenzyme is formed, which can initiate transcription.

Its subcellular location is the plastid. It is found in the chloroplast. The catalysed reaction is RNA(n) + a ribonucleoside 5'-triphosphate = RNA(n+1) + diphosphate. DNA-dependent RNA polymerase catalyzes the transcription of DNA into RNA using the four ribonucleoside triphosphates as substrates. In Nandina domestica (Heavenly bamboo), this protein is DNA-directed RNA polymerase subunit beta.